A 125-amino-acid polypeptide reads, in one-letter code: Steroid Delta-isomerase (125 aa).

Tyr-14 (proton donor) is an active-site residue. Catalysis depends on Asp-38, which acts as the Proton acceptor. Position 99 (Asp-99) interacts with substrate.

As to quaternary structure, homodimer.

The catalysed reaction is a 3-oxo-Delta(5)-steroid = a 3-oxo-Delta(4)-steroid. The protein is Steroid Delta-isomerase (ksi) of Comamonas testosteroni (Pseudomonas testosteroni).